Consider the following 424-residue polypeptide: C4-dicarboxylate transport protein (424 aa).

The next 8 helical transmembrane spans lie at 4–24 (SLFK…VLLG), 44–64 (LIKM…IAGM), 76–96 (VALI…LVVV), 142–162 (IGAF…LFGF), 184–206 (VFFG…AMAF), 222–242 (LIVC…GLIA), 326–346 (IWHQ…AAGV), and 352–372 (IVLA…LALI).

It belongs to the dicarboxylate/amino acid:cation symporter (DAACS) (TC 2.A.23) family.

The protein resides in the cell inner membrane. Responsible for the transport of dicarboxylates such as succinate, fumarate, and malate from the periplasm across the membrane. This chain is C4-dicarboxylate transport protein, found in Erwinia tasmaniensis (strain DSM 17950 / CFBP 7177 / CIP 109463 / NCPPB 4357 / Et1/99).